The sequence spans 153 residues: Insulin-like growth factor 1 (153 aa).

The b stretch occupies residues 49 to 77; sequence GPETLCGAELVDALQFVCGPRGFYFNKPT. 3 cysteine pairs are disulfide-bonded: cysteine 54–cysteine 96, cysteine 66–cysteine 109, and cysteine 95–cysteine 100. The segment at 78–89 is c; it reads GYGSSIRRAPQT. The a stretch occupies residues 90-110; it reads GIVDECCFRSCDLRRLEMYCA. Residues 111–118 form a d region; sequence PLKPTKSA. Positions 119 to 153 are cleaved as a propeptide — e peptide; that stretch reads RSIRAQRHTDMPKTQKEVHLKNTSRGSAGNKTYRM. The segment at 119–153 is disordered; the sequence is RSIRAQRHTDMPKTQKEVHLKNTSRGSAGNKTYRM. Residues 125-138 are compositionally biased toward basic and acidic residues; that stretch reads RHTDMPKTQKEVHL. Polar residues predominate over residues 139-153; that stretch reads KNTSRGSAGNKTYRM.

The protein belongs to the insulin family. As to quaternary structure, forms a ternary complex with IGFR1 and ITGAV:ITGB3. Forms a ternary complex with IGFR1 and ITGA6:ITGB4. Forms a ternary complex with IGFBP3 and ALS.

It is found in the secreted. In terms of biological role, the insulin-like growth factors, isolated from plasma, are structurally and functionally related to insulin but have a much higher growth-promoting activity. May be a physiological regulator of [1-14C]-2-deoxy-D-glucose (2DG) transport and glycogen synthesis in osteoblasts. Stimulates glucose transport in bone-derived osteoblastic (PyMS) cells and is effective at much lower concentrations than insulin, not only regarding glycogen and DNA synthesis but also with regard to enhancing glucose uptake. May play a role in synapse maturation. Ca(2+)-dependent exocytosis of IGF1 is required for sensory perception of smell in the olfactory bulb. Acts as a ligand for IGF1R. Binds to the alpha subunit of IGF1R, leading to the activation of the intrinsic tyrosine kinase activity which autophosphorylates tyrosine residues in the beta subunit thus initiating a cascade of down-stream signaling events leading to activation of the PI3K-AKT/PKB and the Ras-MAPK pathways. Binds to integrins ITGAV:ITGB3 and ITGA6:ITGB4. Its binding to integrins and subsequent ternary complex formation with integrins and IGFR1 are essential for IGF1 signaling. Induces the phosphorylation and activation of IGFR1, MAPK3/ERK1, MAPK1/ERK2 and AKT1. As part of the MAPK/ERK signaling pathway, acts as a negative regulator of apoptosis in cardiomyocytes via promotion of STUB1/CHIP-mediated ubiquitination and degradation of ICER-type isoforms of CREM. This chain is Insulin-like growth factor 1, found in Rattus norvegicus (Rat).